The chain runs to 307 residues: MKPLKEQKIAVLLGGTSAEREVSLTSGDAVLTALRNQGYDAHPIDPKEYPVAQLKEQGFERAFNILHGRGGEDGVIQGVLEQIGLPYTGCGVMTSALTMDKMRTKMLWKGFGLPIADMEIVTRDTVDELNPLEVVERLGLPLMVKPSREGSSVGLTKVNAVEELKNAVDLALTHDDTVLIEEWLSGIEMTVPVLDDQVLPAVQIIPEGEFYDYDAKYISDNTRYICPAPMSEESLQELQKLVKRAYDVVGCRGWSRIDVMTDANGNFRLVEVNTTPGMTSHSLFPKSAATVGYSFEQLVVKILELSA.

In terms of domain architecture, ATP-grasp spans 105–304 (KMLWKGFGLP…FEQLVVKILE (200 aa)). ATP is bound at residue 135–190 (VERLGLPLMVKPSREGSSVGLTKVNAVEELKNAVDLALTHDDTVLIEEWLSGIEMT). Residues Asp258, Glu271, and Asn273 each contribute to the Mg(2+) site.

It belongs to the D-alanine--D-alanine ligase family. The cofactor is Mg(2+). Requires Mn(2+) as cofactor.

The protein resides in the cytoplasm. The enzyme catalyses 2 D-alanine + ATP = D-alanyl-D-alanine + ADP + phosphate + H(+). Its pathway is cell wall biogenesis; peptidoglycan biosynthesis. Cell wall formation. This chain is D-alanine--D-alanine ligase, found in Mannheimia succiniciproducens (strain KCTC 0769BP / MBEL55E).